The primary structure comprises 1497 residues: Polyunsaturated fatty acid synthase subunit C (1497 aa).

Dehydratase (DH) domain regions lie at residues 271 to 422 (YKLC…DYGK) and 797 to 937 (QGQY…RVRI). A compositionally biased stretch (low complexity) spans 944-958 (ASSSASSVGSSASAE). A disordered region spans residues 944-977 (ASSSASSVGSSASAEVAERTRSKAAPQPVASGPA). An enoylreductase (ER) domain region spans residues 1026–1470 (LGDLGDRSFM…ILRGACYLRR (445 aa)).

Belongs to the thioester dehydratase family. FabA subfamily. As to quaternary structure, component of the polyunsaturated fatty acid synthase complex composed of at least ORF-A, ORF-B and ORF-C.

The protein operates within lipid metabolism; fatty acid biosynthesis. Its function is as follows. Polyketide synthase-like protein; part of the polyunsaturated fatty acid synthase composed of the 3 PKS-like subunits A, B and C. While the saturated fatty acids (SFAs) in Thraustochytrium are produced by the conventional fatty acid synthase (FAS) pathway, polyunsaturated fatty acids (PUFAs) including docosahexeanoic acid (DHA) and docosapentaenoic acid (DPA) are synthesized via an anaerobical PKS pathway. PUFA synthase assimilates fatty acyl-CoA, the product of FAS, as the starter unit to synthesize DPA, and this starter unit may be butyryl-CoA, hexanoyl-CoA, or octanoyl-CoA. DPA and DHA biosynthesis seem to differ by the reduction at the N-3 position by PUFA synthase, not the extension of carbon chain. In DHA biosynthesis, PUFA synthase extends the fatty acyl chain from the methyl toward the carboxyl end, and the double bond is formed when the carbon chain is growing, instead of afterward. Therefore, PUFA synthase is unable to transform DPA to DHA, suggesting that DPA is not the precursor of DHA. Moreover, DPA molecule is partly extended by FAS KS domain, so DPA biosynthesis is less dependent on PUFA synthase KS domain than DHA. The polypeptide is Polyunsaturated fatty acid synthase subunit C (Thraustochytrium sp. (strain ATCC 26185 / S-3)).